The primary structure comprises 322 residues: ADACSGLQGFLIFHSFGGGTGSGFTSLLMERLSVDYGKKSKLEFAIYPAPQVSTAVVEPYNSILTTHTTLEHSDCAFMVDNEAIYDICCRNLDIERPTYTNLNRLISQIVSSITASLRFDGALNVDLTEFQTNLVPYPRIHFPLVTYAPIISSERAYHEQLSVAEITSSCFEPNNQMVKCDPRHGKYMACCMLYRGDVVPKDVNVAIAAIKTKRNIQFVDWCPTGVKVGINYQPPTVVPGGDLAQVQRAVCMLSNTTAIAEAWARLDHKFDLMYAKRAFVHWYVSEGMEEGEFAEAREDLAALEKDYEEVGTDSFEDENDEE.

Positions 15, 19, 20, 54, 81, and 103 each coordinate GTP. Glu-129 is an active-site residue.

Belongs to the tubulin family. As to quaternary structure, dimer of alpha and beta chains. A typical microtubule is a hollow water-filled tube with an outer diameter of 25 nm and an inner diameter of 15 nM. Alpha-beta heterodimers associate head-to-tail to form protofilaments running lengthwise along the microtubule wall with the beta-tubulin subunit facing the microtubule plus end conferring a structural polarity. Microtubules usually have 13 protofilaments but different protofilament numbers can be found in some organisms and specialized cells. The cofactor is Mg(2+). In terms of processing, some glutamate residues at the C-terminus are polyglycylated, resulting in polyglycine chains on the gamma-carboxyl group. Glycylation is mainly limited to tubulin incorporated into axonemes (cilia and flagella) whereas glutamylation is prevalent in neuronal cells, centrioles, axonemes, and the mitotic spindle. Both modifications can coexist on the same protein on adjacent residues, and lowering polyglycylation levels increases polyglutamylation, and reciprocally. The precise function of polyglycylation is still unclear. Some glutamate residues at the C-terminus are polyglutamylated, resulting in polyglutamate chains on the gamma-carboxyl group. Polyglutamylation plays a key role in microtubule severing by spastin (SPAST). SPAST preferentially recognizes and acts on microtubules decorated with short polyglutamate tails: severing activity by SPAST increases as the number of glutamates per tubulin rises from one to eight, but decreases beyond this glutamylation threshold.

The protein localises to the cytoplasm. The protein resides in the cytoskeleton. The catalysed reaction is GTP + H2O = GDP + phosphate + H(+). Functionally, tubulin is the major constituent of microtubules, a cylinder consisting of laterally associated linear protofilaments composed of alpha- and beta-tubulin heterodimers. Microtubules grow by the addition of GTP-tubulin dimers to the microtubule end, where a stabilizing cap forms. Below the cap, tubulin dimers are in GDP-bound state, owing to GTPase activity of alpha-tubulin. This Gallus gallus (Chicken) protein is Tubulin alpha-4 chain.